The primary structure comprises 137 residues: Small ribosomal subunit protein uS12 (137 aa).

Disordered regions lie at residues 1 to 21 (MPTINQLVRKPRKSKVEKSDS) and 36 to 57 (TKLSAPQKRGVATRVGTMTPKK). Asp-102 is subject to 3-methylthioaspartic acid.

It belongs to the universal ribosomal protein uS12 family. Part of the 30S ribosomal subunit. Contacts proteins S8 and S17. May interact with IF1 in the 30S initiation complex.

Functionally, with S4 and S5 plays an important role in translational accuracy. Interacts with and stabilizes bases of the 16S rRNA that are involved in tRNA selection in the A site and with the mRNA backbone. Located at the interface of the 30S and 50S subunits, it traverses the body of the 30S subunit contacting proteins on the other side and probably holding the rRNA structure together. The combined cluster of proteins S8, S12 and S17 appears to hold together the shoulder and platform of the 30S subunit. This chain is Small ribosomal subunit protein uS12, found in Streptococcus agalactiae serotype Ia (strain ATCC 27591 / A909 / CDC SS700).